We begin with the raw amino-acid sequence, 200 residues long: Elongation factor Ts (200 aa).

The tract at residues 81-84 (TDFV) is involved in Mg(2+) ion dislocation from EF-Tu.

The protein belongs to the EF-Ts family.

The protein resides in the cytoplasm. Its function is as follows. Associates with the EF-Tu.GDP complex and induces the exchange of GDP to GTP. It remains bound to the aminoacyl-tRNA.EF-Tu.GTP complex up to the GTP hydrolysis stage on the ribosome. The chain is Elongation factor Ts from Nitratidesulfovibrio vulgaris (strain DSM 19637 / Miyazaki F) (Desulfovibrio vulgaris).